We begin with the raw amino-acid sequence, 178 residues long: uncharacterized protein (178 aa).

4 consecutive transmembrane segments (helical) span residues 3–23 (IPIILTLMLFSLGFIFGFISI), 56–76 (IFLMLAGSITFGLSTFINLIF), 101–121 (LILPHGIFEISAMLISAVAGF), and 150–170 (LSLISIILIVIAAFIEVYITP).

To M.jannaschii MJ0706 and Synechocystis PCC 6803 slr1478.

The protein resides in the cell membrane. This is an uncharacterized protein from Methanocaldococcus jannaschii (strain ATCC 43067 / DSM 2661 / JAL-1 / JCM 10045 / NBRC 100440) (Methanococcus jannaschii).